The sequence spans 809 residues: TPR repeat-containing protein TP_0920 (809 aa).

Residues 103 to 125 are disordered; it reads PGEARALPNSEQPEVPASLDSTS. 9 TPR repeats span residues 315–348, 383–416, 418–450, 471–504, 513–550, 552–582, 583–616, 656–689, and 723–756; these read LREY…DPHC, AFLS…DPHQ, LFAL…FLAQ, TEVR…GSAD, LLLR…APDC, LYHF…DPDN, GWLH…LPHE, GQAF…EPQN, and AHVY…WPQC.

The chain is TPR repeat-containing protein TP_0920 from Treponema pallidum (strain Nichols).